Consider the following 99-residue polypeptide: Large ribosomal subunit protein uL23 (99 aa).

This sequence belongs to the universal ribosomal protein uL23 family. In terms of assembly, part of the 50S ribosomal subunit. Contacts protein L29, and trigger factor when it is bound to the ribosome.

Its function is as follows. One of the early assembly proteins it binds 23S rRNA. One of the proteins that surrounds the polypeptide exit tunnel on the outside of the ribosome. Forms the main docking site for trigger factor binding to the ribosome. The polypeptide is Large ribosomal subunit protein uL23 (Hyphomonas neptunium (strain ATCC 15444)).